The sequence spans 131 residues: Phosphoribosyl-AMP cyclohydrolase (131 aa).

D78 contributes to the Mg(2+) binding site. C79 contributes to the Zn(2+) binding site. D80 and D82 together coordinate Mg(2+). The Zn(2+) site is built by C96 and C103.

This sequence belongs to the PRA-CH family. Homodimer. Mg(2+) serves as cofactor. Requires Zn(2+) as cofactor.

Its subcellular location is the cytoplasm. The catalysed reaction is 1-(5-phospho-beta-D-ribosyl)-5'-AMP + H2O = 1-(5-phospho-beta-D-ribosyl)-5-[(5-phospho-beta-D-ribosylamino)methylideneamino]imidazole-4-carboxamide. It functions in the pathway amino-acid biosynthesis; L-histidine biosynthesis; L-histidine from 5-phospho-alpha-D-ribose 1-diphosphate: step 3/9. In terms of biological role, catalyzes the hydrolysis of the adenine ring of phosphoribosyl-AMP. In Neisseria gonorrhoeae (strain ATCC 700825 / FA 1090), this protein is Phosphoribosyl-AMP cyclohydrolase.